The chain runs to 424 residues: MTTPVPVPNGGPAPAAVPAAAEPGSVGIVTPQLIRFDTPLPLASGQSLQSYELAVETYGTLNAGRTNAVLVCHALNASHHVAGLAADDPNDVGWWDNMVGPGKPLDTNRFFVIGVNNLGSCFGSTGPASINPATGHPWGAAFPVLTVEDWVHAQARLADHFGIERFAAVMGGSLGGMQALSWAITCPERVAHCIVIASTPRLSAQNIGFNEVARRAIITDPDFHGGDYYAHNTVPRRGLSVARMIGHITYLSDDDMAEKFGRTQREPAEGGAYRYGYDVEFEVESYLRYQGEKFSRYFDANTYLLITRALDYFDPARGTGGDLARALKPAQADFLLVSFSTDWRFPPERSREIVRALLKNGSPVTYAEIDAPHGHDAFLLDDARYHAVVRGYYERIARELGLDEPAAGAAPAAAEPACAEGCAA.

One can recognise an AB hydrolase-1 domain in the interval 67-381 (NAVLVCHALN…PHGHDAFLLD (315 aa)). Ser173 acts as the Nucleophile in catalysis. Arg243 lines the substrate pocket. Active-site residues include Asp342 and His375. Asp376 contacts substrate.

The protein belongs to the AB hydrolase superfamily. MetX family. Homodimer.

The protein resides in the cytoplasm. The enzyme catalyses L-homoserine + succinyl-CoA = O-succinyl-L-homoserine + CoA. The protein operates within amino-acid biosynthesis; L-methionine biosynthesis via de novo pathway; O-succinyl-L-homoserine from L-homoserine: step 1/1. Transfers a succinyl group from succinyl-CoA to L-homoserine, forming succinyl-L-homoserine. In vitro, also has serine succinyl transferase activity. The polypeptide is Homoserine O-succinyltransferase (Bordetella petrii (strain ATCC BAA-461 / DSM 12804 / CCUG 43448)).